Reading from the N-terminus, the 2092-residue chain is RNA-directed RNA polymerase L (2092 aa).

The endonuclease stretch occupies residues 18–215 (VPIKHFDCTM…ELSSTDEELG (198 aa)). Mn(2+) contacts are provided by His-79, Asp-111, and Glu-125. The active-site For endonuclease activity is Lys-143. Residues 975 to 1166 (ARKQCKGPVW…AICFRMKKEL (192 aa)) form the RdRp catalytic domain. Asp-1134 lines the Mg(2+) pocket. Residues 1706–1822 (GAGTVGGFIK…PFGCPVYIIK (117 aa)) are cap-binding.

This sequence belongs to the Bunyavirales RNA polymerase family. As to quaternary structure, homomultimer. Interacts with glycoprotein N; this interaction allows efficient polymerase packaging into virus particles. Interacts with nucleoprotein N. The cofactor is Mn(2+). It depends on Mg(2+) as a cofactor.

It is found in the host Golgi apparatus. Its subcellular location is the host endoplasmic reticulum. The protein localises to the host endoplasmic reticulum-Golgi intermediate compartment. The protein resides in the virion. The catalysed reaction is RNA(n) + a ribonucleoside 5'-triphosphate = RNA(n+1) + diphosphate. Its function is as follows. RNA-dependent RNA polymerase, which is responsible for the replication and transcription of the viral RNA genome using antigenomic RNA as an intermediate. During transcription, synthesizes subgenomic RNAs and assures their capping by a cap-snatching mechanism, which involves the endonuclease activity cleaving the host capped pre-mRNAs. These short capped RNAs are then used as primers for viral transcription. The 3'-end of subgenomic mRNAs molecules are not polyadenylated. During replication, the polymerase binds the 5' and 3' vRNA extremities at distinct sites. In turn, significant conformational changes occur in the polymerase and in vRNA to initiate active RNA synthesis. As a consequence of the use of the same enzyme for both transcription and replication, these mechanisms need to be well coordinated. This Aedes (Bovine) protein is RNA-directed RNA polymerase L.